A 425-amino-acid polypeptide reads, in one-letter code: 2-methylserine hydroxymethyltransferase (425 aa).

Residues L126 and 130-132 (GHL) contribute to the (6S)-5,6,7,8-tetrahydrofolate site. K235 bears the N6-(pyridoxal phosphate)lysine mark.

Belongs to the SHMT family. In terms of assembly, homodimer. Pyridoxal 5'-phosphate serves as cofactor.

The protein resides in the cytoplasm. The enzyme catalyses (6R)-5,10-methylene-5,6,7,8-tetrahydrofolate + D-alanine + H2O = 2-methylserine + (6S)-5,6,7,8-tetrahydrofolate. It functions in the pathway one-carbon metabolism; tetrahydrofolate interconversion. Functionally, catalyzes the reversible interconversion of alpha-methyl-L-serine to D-alanine with tetrahydrofolate (THF) serving as the one-carbon carrier. Cannot use alpha-methyl-D-serine, L-serine, D-serine or L-alanine. The protein is 2-methylserine hydroxymethyltransferase of Aminobacter sp.